Consider the following 91-residue polypeptide: Small ribosomal subunit protein uS15 (91 aa).

This sequence belongs to the universal ribosomal protein uS15 family. As to quaternary structure, part of the 30S ribosomal subunit. Forms a bridge to the 50S subunit in the 70S ribosome, contacting the 23S rRNA.

Functionally, one of the primary rRNA binding proteins, it binds directly to 16S rRNA where it helps nucleate assembly of the platform of the 30S subunit by binding and bridging several RNA helices of the 16S rRNA. In terms of biological role, forms an intersubunit bridge (bridge B4) with the 23S rRNA of the 50S subunit in the ribosome. The protein is Small ribosomal subunit protein uS15 of Rickettsia africae (strain ESF-5).